A 153-amino-acid chain; its full sequence is ORM1-like protein 3 (153 aa).

The interval 1–17 (MNVGTAHSEVNPNTRVM) is important for ceramide level-sensing. At 1–21 (MNVGTAHSEVNPNTRVMNSRG) the chain is on the cytoplasmic side. 2 consecutive transmembrane segments (helical) span residues 22 to 42 (IWLS…SIPF) and 43 to 63 (VSVP…MYIF). Residues 64-94 (LHTVKGTPFETPDQGKARLLTHWEQMDYGVQ) lie on the Cytoplasmic side of the membrane. The helical transmembrane segment at 95–117 (FTASRKFLTITPIVLYFLTSFYT) threads the bilayer. The Extracellular segment spans residues 118–121 (KYDQ). Residues 122 to 142 (IHFVLNTVSLMSVLIPKLPQL) traverse the membrane as a helical segment. Residue P137 is modified to Hydroxyproline. Residues 143–153 (HGVRIFGINKY) lie on the Cytoplasmic side of the membrane.

Belongs to the ORM family. As to quaternary structure, ceramide-sensitive subunit of the serine palmitoyltransferase (SPT) complex, which is also composed of SPTLC1, SPTLC2/3 and SPTSSA/B. In terms of processing, when hydroxylated at Pro-137, ubiquitinated via 'Lys-48'-linkage, leading to proteasomal degradation. In endothelial cells, ORMDL3 proteasomal degradation is controlled by the sphingosine 1-phosphate receptor signaling pathway.

The protein localises to the endoplasmic reticulum membrane. Its function is as follows. Plays an essential role in the homeostatic regulation of sphingolipid de novo biosynthesis by modulating the activity of the serine palmitoyltransferase (SPT) in response to ceramide levels. When complexed to SPT, the binding of ceramides to its N-terminus stabilizes a conformation that block SPT substrate entry, hence preventing SPT catalytic activity. Through this mechanism, maintains ceramide levels at sufficient concentrations for the production of complex sphingolipids, but which prevents the accumulation of ceramides to levels that trigger apoptosis. The sequence is that of ORM1-like protein 3 (ORMDL3) from Ailuropoda melanoleuca (Giant panda).